We begin with the raw amino-acid sequence, 500 residues long: Glycerol kinase (500 aa).

T14 is a binding site for ADP. Residues T14, T15, and S16 each contribute to the ATP site. T14 is a sn-glycerol 3-phosphate binding site. An ADP-binding site is contributed by R18. Sn-glycerol 3-phosphate is bound by residues R84, E85, and Y136. Glycerol contacts are provided by R84, E85, and Y136. H232 bears the Phosphohistidine; by HPr mark. D246 is a sn-glycerol 3-phosphate binding site. Glycerol contacts are provided by D246 and Q247. Residues T268 and G311 each contribute to the ADP site. 4 residues coordinate ATP: T268, G311, Q315, and G412. The ADP site is built by G412 and N416.

The protein belongs to the FGGY kinase family. Homotetramer and homodimer (in equilibrium). Post-translationally, the phosphoenolpyruvate-dependent sugar phosphotransferase system (PTS), including enzyme I, and histidine-containing protein (HPr) are required for the phosphorylation, which leads to the activation of the enzyme.

It carries out the reaction glycerol + ATP = sn-glycerol 3-phosphate + ADP + H(+). It participates in polyol metabolism; glycerol degradation via glycerol kinase pathway; sn-glycerol 3-phosphate from glycerol: step 1/1. Its activity is regulated as follows. Activated by phosphorylation and inhibited by fructose 1,6-bisphosphate (FBP). Its function is as follows. Key enzyme in the regulation of glycerol uptake and metabolism. Catalyzes the phosphorylation of glycerol to yield sn-glycerol 3-phosphate. This is Glycerol kinase from Limosilactobacillus reuteri (strain DSM 20016) (Lactobacillus reuteri).